A 533-amino-acid chain; its full sequence is Probable protein kinase UbiB (533 aa).

A helical membrane pass occupies residues 24-44; that stretch reads LILELPMLPWWLRLLGATLPW. The Protein kinase domain maps to 126 to 494; the sequence is RFEREPLASA…WKGSRHDWLG (369 aa). ATP contacts are provided by residues 132-140 and Lys154; that span reads LASASVAQV. Residue Asp289 is the Proton acceptor of the active site. Residues 510-530 form a helical membrane-spanning segment; it reads LGQQLEAWPAWVMLAGGVFLI.

This sequence belongs to the ABC1 family. UbiB subfamily.

It localises to the cell inner membrane. Its pathway is cofactor biosynthesis; ubiquinone biosynthesis [regulation]. Is probably a protein kinase regulator of UbiI activity which is involved in aerobic coenzyme Q (ubiquinone) biosynthesis. This chain is Probable protein kinase UbiB, found in Pseudomonas aeruginosa (strain ATCC 15692 / DSM 22644 / CIP 104116 / JCM 14847 / LMG 12228 / 1C / PRS 101 / PAO1).